A 329-amino-acid chain; its full sequence is Red chlorophyll catabolite reductase 1, chloroplastic (329 aa).

The span at 1 to 11 (MLQLRSPPPAT) shows a compositional bias: pro residues. A chloroplast-targeting transit peptide spans 1–50 (MLQLRSPPPATSSPSSAVSFPTLAPRLLPLRRRRRGAGSQLGGKTSSAVR). A disordered region spans residues 1 to 61 (MLQLRSPPPA…SSAAAPGATE (61 aa)). 2 stretches are compositionally biased toward low complexity: residues 12–28 (SSPS…PRLL) and 46–59 (SSAV…APGA). Red chlorophyll catabolite contacts are provided by residues Glu-163, 216 to 218 (YRS), and Asp-299.

Expressed in leaves. Expressed at low levels in roots, stems, panicles and seeds.

Its subcellular location is the plastid. The protein resides in the chloroplast. The catalysed reaction is primary fluorescent chlorophyll catabolite + 2 oxidized [2Fe-2S]-[ferredoxin] = red chlorophyll catabolite + 2 reduced [2Fe-2S]-[ferredoxin] + 3 H(+). Its pathway is porphyrin-containing compound metabolism; chlorophyll degradation. Functionally, catalyzes the key reaction of chlorophyll catabolism, porphyrin macrocycle cleavage of pheophorbide a (pheide a) to a primary fluorescent catabolite (pFCC). Works in a two-step reaction with pheophorbide a oxygenase (PaO) by reducing the C20/C1 double bond of the intermediate, RCC. Belongs to the chlorophyll catabolic enzymes (CCEs). May play a role in senescence and response to wounding. The sequence is that of Red chlorophyll catabolite reductase 1, chloroplastic from Oryza sativa subsp. japonica (Rice).